A 478-amino-acid chain; its full sequence is MQQTCIRLVKLDMLSTLTRFRTHSAIRCCAQRLFHCRPSLFISARTYFIKIDSSSLPKLKGSVSFSASCVSLGSSRLGLCSSSFKTGAPAALRAPVVFQRTRGFHTSGRRRALPALPLLWMVLKPLQKIMAIILGRSIRKWWVALPANKKQLFREWSWRRRWHFLGAGTGLLFIASLFFFTHLDESPITGRTRLLVFSRKNFRELAQFNADAFMEEFKDSLIASSDPRHKVVEQVVQILAQRNQDIAEISAVPWTVHVVDSPTMNAFVLPNGEIFVFTGMLNAVTDIHQLTFILGHEMAHALIGHAAEQASLSHVVELLSLVLLTAIWAVCPRDSLAALGHWIQGKLVQFLFDRPFSRKLEAEADQVGLQMAAKACADVRAGPVFWEQMEIFDQLSGQPTMPEWLSTHPSHQNRVRQLDRLIPEALELRARCNCPELPKTDPRVVFNEAVRLVLEGKKEQMLEKEEKNGKTQTGDMFP.

Positions L134–F164 are stress-sensor region. Residues H163 to L183 traverse the membrane as a helical segment. H296 serves as a coordination point for Zn(2+). Residue E297 is part of the active site. Zn(2+)-binding residues include H300 and E361. Residues C376 and C434 are joined by a disulfide bond.

The protein belongs to the peptidase M48 family. In terms of assembly, homooligomer. Zn(2+) serves as cofactor. Post-translationally, autocatalytically cleaved in response to mitochondrial depolarization both at the N-terminus and C-terminus to generate the short active form (S-OMA1). The S-OMA1 form is unstable. May form a redox-dependent disulfide bond. Exists in a semi-oxidized state and is activated by prolonged hypoxia.

The protein localises to the mitochondrion inner membrane. With respect to regulation, protease activity is activated upon autocatalytic cleavage in response to mitochondrial depolarization. Its function is as follows. Metalloprotease that is part of the quality control system in the inner membrane of mitochondria. Activated in response to various mitochondrial stress, leading to the proteolytic cleavage of target proteins, such as opa1 and dele1. Involved in the fusion of the mitochondrial inner membranes by mediating cleavage of opa1 at S1 position, generating the soluble opa1 (S-opa1), which cooperates with the membrane form (L-opa1) to coordinate the fusion of mitochondrial inner membranes. Following stress conditions that induce loss of mitochondrial membrane potential, mediates cleavage of opa1, leading to excess production of soluble opa1 (S-opa1) and negative regulation of mitochondrial fusion. Also acts as an activator of the integrated stress response (ISR): in response to mitochondrial stress, mediates cleavage of dele1 to generate the processed form of dele1 (S-DELE1), which translocates to the cytosol and activates eif2ak1/hri to trigger the ISR. Required for the stability of the respiratory supercomplexes. In Danio rerio (Zebrafish), this protein is Metalloendopeptidase OMA1, mitochondrial.